The primary structure comprises 150 residues: Small ribosomal subunit protein uS13 (150 aa).

The protein belongs to the universal ribosomal protein uS13 family. Part of the 30S ribosomal subunit. Forms a loose heterodimer with protein S19. Forms two bridges to the 50S subunit in the 70S ribosome.

Located at the top of the head of the 30S subunit, it contacts several helices of the 16S rRNA. In the 70S ribosome it contacts the 23S rRNA (bridge B1a) and protein L5 of the 50S subunit (bridge B1b), connecting the 2 subunits; these bridges are implicated in subunit movement. In Aeropyrum pernix (strain ATCC 700893 / DSM 11879 / JCM 9820 / NBRC 100138 / K1), this protein is Small ribosomal subunit protein uS13.